A 555-amino-acid polypeptide reads, in one-letter code: Formate--tetrahydrofolate ligase (555 aa).

65–72 is an ATP binding site; sequence TPAGEGKT.

It belongs to the formate--tetrahydrofolate ligase family.

It carries out the reaction (6S)-5,6,7,8-tetrahydrofolate + formate + ATP = (6R)-10-formyltetrahydrofolate + ADP + phosphate. Its pathway is one-carbon metabolism; tetrahydrofolate interconversion. The chain is Formate--tetrahydrofolate ligase from Caldanaerobacter subterraneus subsp. tengcongensis (strain DSM 15242 / JCM 11007 / NBRC 100824 / MB4) (Thermoanaerobacter tengcongensis).